The sequence spans 567 residues: MSTSVFNRRWAALLLEALTRHGVRHICIAPGSRSTPLTLAAAANPSLVCHTHFDERGLGHLALGLAKASTEPVAVIVTSGTAVANLYPALIEAGLTGERLILLTADRPPELIDCGANQAIRQQGLFASHPTLSVNLPRPTPDISARWLVSTLDSAMAQLQHGALHINCPFAEPLYGGDEQQYADWSASLGDWWQDCHPWLRQTCYPPSLYQPLAQQADWFFWRQKRGVVIAGRMGAEEGRQLTAWAAMLGWPLIGDVLSQTGQPLPCADLWLAHPRAQETLAQAQIVLQFGSSLTSKRLLQWQTACQPQEYWLVDSAPGRLDPANHRGRRIICPVGEWLSRHPAQRRTPWATELAVYSESAQAQVIETLSGQFSEAAVAHQLAELLPDNGQLFVGNSLIVRLIDALGQLPAGYPVYSNRGASGIDGLLSTAAGVQRATAKPTLAIVGDLSALYDLNALALLRQSSAPMVLLVINNNGGQIFSLLPTPEAERQRFYCMPQDVNFEHAAVMFSLGYARPNSWPQLREHVHQCWLRGGTTLIEVQVPPSQGAETLQQLVQQVTLIPQVAP.

This sequence belongs to the TPP enzyme family. MenD subfamily. In terms of assembly, homodimer. Mg(2+) is required as a cofactor. Mn(2+) serves as cofactor. It depends on thiamine diphosphate as a cofactor.

It catalyses the reaction isochorismate + 2-oxoglutarate + H(+) = 5-enolpyruvoyl-6-hydroxy-2-succinyl-cyclohex-3-ene-1-carboxylate + CO2. It participates in quinol/quinone metabolism; 1,4-dihydroxy-2-naphthoate biosynthesis; 1,4-dihydroxy-2-naphthoate from chorismate: step 2/7. Its pathway is quinol/quinone metabolism; menaquinone biosynthesis. Its function is as follows. Catalyzes the thiamine diphosphate-dependent decarboxylation of 2-oxoglutarate and the subsequent addition of the resulting succinic semialdehyde-thiamine pyrophosphate anion to isochorismate to yield 2-succinyl-5-enolpyruvyl-6-hydroxy-3-cyclohexene-1-carboxylate (SEPHCHC). The protein is 2-succinyl-5-enolpyruvyl-6-hydroxy-3-cyclohexene-1-carboxylate synthase of Yersinia pseudotuberculosis serotype I (strain IP32953).